Consider the following 447-residue polypeptide: Peptide-N(4)-(N-acetyl-beta-glucosaminyl)asparagine amidase (447 aa).

Zn(2+)-binding residues include Cys209, Cys212, Cys241, and Cys244. Cys267 serves as the catalytic Nucleophile. Catalysis depends on residues His294 and Asp311.

Belongs to the transglutaminase-like superfamily. PNGase family. Zn(2+) serves as cofactor.

The protein localises to the cytoplasm. It catalyses the reaction Hydrolysis of an N(4)-(acetyl-beta-D-glucosaminyl)asparagine residue in which the glucosamine residue may be further glycosylated, to yield a (substituted) N-acetyl-beta-D-glucosaminylamine and a peptide containing an aspartate residue.. In terms of biological role, specifically deglycosylates the denatured form of N-linked glycoproteins in the cytoplasm and assists their proteasome-mediated degradation. Cleaves the beta-aspartyl-glucosamine (GlcNAc) of the glycan and the amide side chain of Asn, converting Asn to Asp. Prefers proteins containing high-mannose over those bearing complex type oligosaccharides. Can recognize misfolded proteins in the endoplasmic reticulum that are exported to the cytosol to be destroyed and deglycosylate them, while it has no activity toward native proteins. Deglycosylation is a prerequisite for subsequent proteasome-mediated degradation of some, but not all, misfolded glycoproteins. The sequence is that of Peptide-N(4)-(N-acetyl-beta-glucosaminyl)asparagine amidase (PNG1) from Oryza sativa subsp. japonica (Rice).